The chain runs to 876 residues: Protein TORMOZ EMBRYO DEFECTIVE (876 aa).

WD repeat units lie at residues 58 to 97, 100 to 139, 142 to 183, 190 to 229, 255 to 294, 308 to 347, 356 to 396, 399 to 441, 444 to 484, 497 to 536, 539 to 580, 581 to 620, and 623 to 662; these read GESD…CIRS, GHEG…CTHY, GHKG…TEKK, KHFS…CKAT, LDQK…CLYE, ESKR…EETE, GYNE…CSYV, GHKE…CIGV, GHNG…EDSE, AHDK…HVVT, GHKR…KTFE, GHTS…CIAT, and QHED…DKED. The tract at residues 816–876 is disordered; that stretch reads VETEYPKDEK…AEAQGSVIAV (61 aa). The segment covering 819–831 has biased composition (basic and acidic residues); the sequence is EYPKDEKKKEKDV. The Nuclear localization signal signature appears at 848–855; it reads SRKRKSQK. Basic residues predominate over residues 849 to 864; sequence RKRKSQKSKGKSNKKR.

As to expression, preferentially expressed in dividing cells in a variety of tissues and meristematic regions.

It localises to the nucleus. Its subcellular location is the nucleolus. Its function is as follows. Essential protein involved in the regulation of cell division planes during embryogenesis which defines cell patterning, especially longitudinal division planes of the proembryo, probably via the regulation of embryo patterning genes expression patterns. This Arabidopsis thaliana (Mouse-ear cress) protein is Protein TORMOZ EMBRYO DEFECTIVE.